A 345-amino-acid chain; its full sequence is 3-isopropylmalate dehydrogenase (345 aa).

Residues R94, R104, R130, and D215 each contribute to the substrate site. D215, D239, and D243 together coordinate Mg(2+). Residue 273–285 (GSAPDIAGKGIAN) coordinates NAD(+).

Belongs to the isocitrate and isopropylmalate dehydrogenases family. LeuB type 1 subfamily. As to quaternary structure, homodimer. Mg(2+) serves as cofactor. It depends on Mn(2+) as a cofactor.

The protein resides in the cytoplasm. The catalysed reaction is (2R,3S)-3-isopropylmalate + NAD(+) = 4-methyl-2-oxopentanoate + CO2 + NADH. The protein operates within amino-acid biosynthesis; L-leucine biosynthesis; L-leucine from 3-methyl-2-oxobutanoate: step 3/4. In terms of biological role, catalyzes the oxidation of 3-carboxy-2-hydroxy-4-methylpentanoate (3-isopropylmalate) to 3-carboxy-4-methyl-2-oxopentanoate. The product decarboxylates to 4-methyl-2 oxopentanoate. This chain is 3-isopropylmalate dehydrogenase (leuB), found in Lactococcus lactis subsp. lactis (strain IL1403) (Streptococcus lactis).